The sequence spans 494 residues: Glutamyl-tRNA(Gln) amidotransferase subunit A (494 aa).

Residues Lys-79 and Ser-159 each act as charge relay system in the active site. The active-site Acyl-ester intermediate is the Ser-183.

Belongs to the amidase family. GatA subfamily. Heterotrimer of A, B and C subunits.

It catalyses the reaction L-glutamyl-tRNA(Gln) + L-glutamine + ATP + H2O = L-glutaminyl-tRNA(Gln) + L-glutamate + ADP + phosphate + H(+). In terms of biological role, allows the formation of correctly charged Gln-tRNA(Gln) through the transamidation of misacylated Glu-tRNA(Gln) in organisms which lack glutaminyl-tRNA synthetase. The reaction takes place in the presence of glutamine and ATP through an activated gamma-phospho-Glu-tRNA(Gln). The chain is Glutamyl-tRNA(Gln) amidotransferase subunit A from Bartonella henselae (strain ATCC 49882 / DSM 28221 / CCUG 30454 / Houston 1) (Rochalimaea henselae).